A 975-amino-acid polypeptide reads, in one-letter code: GPI inositol-deacylase (975 aa).

The helical transmembrane segment at serine 27 to serine 47 threads the bilayer. Asparagine 49 is a glycosylation site (N-linked (GlcNAc...) asparagine). Serine 210 is a catalytic residue. 5 N-linked (GlcNAc...) asparagine glycosylation sites follow: asparagine 276, asparagine 384, asparagine 407, asparagine 419, and asparagine 488. The chain crosses the membrane as a helical span at residues leucine 655 to tyrosine 675. N-linked (GlcNAc...) asparagine glycosylation occurs at asparagine 696. The next 3 helical transmembrane spans lie at leucine 699 to threonine 719, phenylalanine 751 to leucine 771, and valine 818 to valine 838. N-linked (GlcNAc...) asparagine glycosylation occurs at asparagine 867. 3 helical membrane-spanning segments follow: residues valine 868–phenylalanine 888, asparagine 932–isoleucine 952, and leucine 955–leucine 975.

This sequence belongs to the GPI inositol-deacylase family.

It is found in the endoplasmic reticulum membrane. Its function is as follows. Involved in inositol deacylation of GPI-anchored proteins which plays important roles in the quality control and ER-associated degradation of GPI-anchored proteins. This Kluyveromyces lactis (strain ATCC 8585 / CBS 2359 / DSM 70799 / NBRC 1267 / NRRL Y-1140 / WM37) (Yeast) protein is GPI inositol-deacylase (BST1).